Reading from the N-terminus, the 142-residue chain is ATP synthase epsilon chain (142 aa).

It belongs to the ATPase epsilon chain family. F-type ATPases have 2 components, CF(1) - the catalytic core - and CF(0) - the membrane proton channel. CF(1) has five subunits: alpha(3), beta(3), gamma(1), delta(1), epsilon(1). CF(0) has three main subunits: a, b and c.

Its subcellular location is the cell inner membrane. Functionally, produces ATP from ADP in the presence of a proton gradient across the membrane. This Maridesulfovibrio salexigens (strain ATCC 14822 / DSM 2638 / NCIMB 8403 / VKM B-1763) (Desulfovibrio salexigens) protein is ATP synthase epsilon chain.